We begin with the raw amino-acid sequence, 1997 residues long: MSTEDEKLLKEAKKLPWDERLQHKNWKVRNDANIDLAALCDSITDPKDARLREFGPLFKKTVADSNAPVQEKALDALLAFQRAADADASRYAKEVCDAIVAKCLTGRPKTVEKAQAAFLLWVELEAAEVFLESMEKAVKNKVAKAVVPAIDVMFQALSEFGAKVVPPKKILKMLPELFDHPDQNVRASSKGLTLELCRWIGKEPVKAILFEKMRDTMKKELEAELANVSGIAKPTRKIRSEQEKELEEEVVPEAAGTNNSEEAVPEAPMEIDEYDLVDPVDILTPLEKSGFWDGVKATKWSERRDAVAELTKLASTKKIAPGDFHEICRTLKKLITDVNLAVSVEATQAIGNLAKGLRTHFSGNSRVLLPVLLEKLKEKKPTMTEALSQTLQAMHKSGCITLLDVIEDVRVAVKNKVPLVRSLTLNWVAFCIETSNKATVLKLHKEYVPICMECLNDGTPEVRDASFSVLTAIAKMVGMKPLERSLEKLDDVRKKKLSDMIGSASDTTSGTVAASNTGVGTSAREVMDSSSMRRSAASMLSGKKPVQAVPATKKSGPAKSATAKKTDGGPQSKASAAPVIEDVEPSEMSLEEIEEKLSSVVKSETISQLKSTVWKERLEAISMLKQEVESLTELDKSAELLVRLLCAVPGWSEKNVQVQQQVIEVSTYIASTVNRFPKRCVVLCLLGISERVADIKTRGHAMKCLTAFCEAVGPGFVFERLYKIMKEHKNPKVLSEGILWMVSAVEDFGISNLKLKDTIDFCKDIGLQSSAAATRNATIKLIGVLHKFVGPDIKGFLSDVKPALLSTLDAEYEKNPFEGTASAPKRTVRAADAVSSASSGTSDGLPREDISAKITPTLLKNLGSPDWKLRLESIDAVSKIVEEAHKRIQPTGTVELFTALRARLYDSNKNLVMATLSTIGGLASAMGPAVEKSSKGILADVLKCLGDNKKHMRECTLTALDLWVAAAQLDKMVPYITVTLGDQKTGSEGRKDLFDWLSKHASNMSDPSEALPLLKPSASSLMDKSSEVRKAAESFMNEILKICGQDVVAKNLKDLPSPTLAIVAERLKLSTVHEGFSDSVKMVTTSMSLPSKAGSKNNKHGPNDRGSNVSKAVSQRGIPARSSVTMISSQDSIQSQALFNIKDSNKEERERRVLVRKFKFEEPRREQIDELKIELFRHFREDVSLRLWNSDFKRQIDGIELLQKALPSSRKEVIELLDILLRWFVLRFCESNTTCLLKVLDFLPELFDVLKDQSYMLTEAEAAIFLPCLMEKSGHNIEKVREKMGELIKQMVNIYSLPKLLPYILEGLRSKNNRTRIECVDIIGYFMDHHGTEVSGLLKNLPSVAALTAERDGEIRKAALNTLATAYKNLGDDVWRYVGKLSDAQRSMLDDRFKWKAREMDKRREGRPGDARAALRRSVRENGSDIAEQSGEAVSRSMAGSMISRENFGYSDAHMVPRQMATATPGPADWREALDIVALGLPEQSVEGMKVICHELTQAVDPESSVLDDLIKEADRLVSCLAVMVPKTFNFSLSGASSRSCKYVLNTLMQTFQIKRLAHAVKEGTLDNLITELLLWLLDERVPLMDDGSQLLKALNVLMLKILDNAERTSSFVVLINLLRPLDPSRWPSPTPPESLAVKNQKFSDLVVKCLIKLTKVLQSTIYEVDLDRILQSIHIYLQELGMEEIRRRAGADDKPLRMVKTVLHELVKLRGTAIKGHLSMVPIDAEPQPIILAYIDLNLQTLAAARMLTPSGTMGQTHWGDAGSNNPNPSTHSTDAQLKQELAAVFKKIGDKQTCTIGLYELYRITQLYPKVDIFAQLQNASEAFRTYIRDGLAQVEKNAAAGRTPSSLPLSTPPPIAPIPSPKFAPSPVHTKSINNKTDCNEDDAGGDTHPFRGQGEIDNRLQTTNLQTDRYQSSGTLDALRERMKSIQAAAVGANFDGVQARPLPSMNGNTLHGGTRLDADPQTQNIIPPMDERALSGLQARMERLKSGSMEPL.

HEAT repeat units lie at residues 48–86 and 164–202; these read DARLREFGPLFKKTVADSNAPVQEKALDALLAFQRAADA and VVPPKKILKMLPELFDHPDQNVRASSKGLTLELCRWIGK. The segment at 236–264 is disordered; sequence RKIRSEQEKELEEEVVPEAAGTNNSEEAV. HEAT repeat units lie at residues 321–359, 362–400, and 441–479; these read PGDFHEICRTLKKLITDVNLAVSVEATQAIGNLAKGLRT, SGNSRVLLPVLLEKLKEKKPTMTEALSQTLQAMHKSGCI, and LKLHKEYVPICMECLNDGTPEVRDASFSVLTAIAKMVGM. The disordered stretch occupies residues 501 to 576; it reads IGSASDTTSG…DGGPQSKASA (76 aa). Residues 504 to 520 show a composition bias toward polar residues; it reads ASDTTSGTVAASNTGVG. A compositionally biased stretch (low complexity) spans 529 to 539; sequence SSSMRRSAASM. 4 HEAT repeats span residues 848-886, 890-928, 931-969, and 1007-1045; these read EDISAKITPTLLKNLGSPDWKLRLESIDAVSKIVEEAHK, PTGTVELFTALRARLYDSNKNLVMATLSTIGGLASAMGP, EKSSKGILADVLKCLGDNKKHMRECTLTALDLWVAAAQL, and PSEALPLLKPSASSLMDKSSEVRKAAESFMNEILKICGQ. The segment at 1087 to 1115 is disordered; sequence MSLPSKAGSKNNKHGPNDRGSNVSKAVSQ. HEAT repeat units follow at residues 1233–1259, 1260–1294, 1295–1332, and 1334–1372; these read TTCLLKVLDFLPELFDVLKDQSYMLTE, AEAAIFLPCLMEKSGHNIEKVREKMGELIKQMVNI, YSLPKLLPYILEGLRSKNNRTRIECVDIIGYFMDHHGT, and VSGLLKNLPSVAALTAERDGEIRKAALNTLATAYKNLGD. Over residues 1400–1410 the composition is skewed to basic and acidic residues; sequence MDKRREGRPGD. The disordered stretch occupies residues 1400-1436; sequence MDKRREGRPGDARAALRRSVRENGSDIAEQSGEAVSR. Residues 1539–1579 form an HEAT 14 repeat; it reads RSCKYVLNTLMQTFQIKRLAHAVKEGTLDNLITELLLWLLD. A disordered region spans residues 1755 to 1776; the sequence is MGQTHWGDAGSNNPNPSTHSTD. Residues 1764–1776 are compositionally biased toward polar residues; that stretch reads GSNNPNPSTHSTD.

The protein belongs to the TOG/XMAP215 family.

It is found in the cytoplasm. The protein localises to the cytoskeleton. In terms of biological role, microtubule-associated protein that is essential for cortical microtubules organization and function. This chain is Protein MOR1 (MOR1), found in Oryza sativa subsp. japonica (Rice).